Here is a 579-residue protein sequence, read N- to C-terminus: 2-isopropylmalate synthase (579 aa).

One can recognise a Pyruvate carboxyltransferase domain in the interval 33-308; the sequence is PRWLSTDLRD…DPGIDFSDIN (276 aa). D42, H247, H249, and N283 together coordinate Mg(2+). The segment at 450 to 579 is regulatory domain; it reads SSDLPVPLAS…IVAPLVAAGR (130 aa).

The protein belongs to the alpha-IPM synthase/homocitrate synthase family. LeuA type 2 subfamily. As to quaternary structure, homodimer. Requires Mg(2+) as cofactor.

It localises to the cytoplasm. The enzyme catalyses 3-methyl-2-oxobutanoate + acetyl-CoA + H2O = (2S)-2-isopropylmalate + CoA + H(+). The protein operates within amino-acid biosynthesis; L-leucine biosynthesis; L-leucine from 3-methyl-2-oxobutanoate: step 1/4. In terms of biological role, catalyzes the condensation of the acetyl group of acetyl-CoA with 3-methyl-2-oxobutanoate (2-ketoisovalerate) to form 3-carboxy-3-hydroxy-4-methylpentanoate (2-isopropylmalate). The sequence is that of 2-isopropylmalate synthase from Streptosporangium roseum (strain ATCC 12428 / DSM 43021 / JCM 3005 / KCTC 9067 / NCIMB 10171 / NRRL 2505 / NI 9100).